A 133-amino-acid chain; its full sequence is UPF0344 protein SE_0666 (133 aa).

4 helical membrane passes run 1-21 (MLHV…ATYL), 42-62 (LFML…FMAA), 71-91 (MLLT…EISI), and 103-123 (FFWI…ILPW).

Belongs to the UPF0344 family.

The protein resides in the cell membrane. In Staphylococcus epidermidis (strain ATCC 12228 / FDA PCI 1200), this protein is UPF0344 protein SE_0666.